The primary structure comprises 447 residues: Gamma-glutamyl phosphate reductase (447 aa).

The protein belongs to the gamma-glutamyl phosphate reductase family.

The protein resides in the cytoplasm. The catalysed reaction is L-glutamate 5-semialdehyde + phosphate + NADP(+) = L-glutamyl 5-phosphate + NADPH + H(+). Its pathway is amino-acid biosynthesis; L-proline biosynthesis; L-glutamate 5-semialdehyde from L-glutamate: step 2/2. Catalyzes the NADPH-dependent reduction of L-glutamate 5-phosphate into L-glutamate 5-semialdehyde and phosphate. The product spontaneously undergoes cyclization to form 1-pyrroline-5-carboxylate. The sequence is that of Gamma-glutamyl phosphate reductase from Methanosarcina barkeri (strain Fusaro / DSM 804).